A 101-amino-acid polypeptide reads, in one-letter code: NADH-quinone oxidoreductase subunit K (101 aa).

The next 3 helical transmembrane spans lie at Leu-4–Leu-24, Ile-30–Phe-50, and Val-61–Leu-81.

This sequence belongs to the complex I subunit 4L family. NDH-1 is composed of 14 different subunits. Subunits NuoA, H, J, K, L, M, N constitute the membrane sector of the complex.

It localises to the cell inner membrane. It catalyses the reaction a quinone + NADH + 5 H(+)(in) = a quinol + NAD(+) + 4 H(+)(out). In terms of biological role, NDH-1 shuttles electrons from NADH, via FMN and iron-sulfur (Fe-S) centers, to quinones in the respiratory chain. The immediate electron acceptor for the enzyme in this species is believed to be ubiquinone. Couples the redox reaction to proton translocation (for every two electrons transferred, four hydrogen ions are translocated across the cytoplasmic membrane), and thus conserves the redox energy in a proton gradient. This is NADH-quinone oxidoreductase subunit K from Azoarcus sp. (strain BH72).